Here is a 903-residue protein sequence, read N- to C-terminus: HTH-type transcriptional regulator MalT (903 aa).

Residue 39–46 (CPAGYGKT) coordinates ATP. The 66-residue stretch at 832–897 (ELIRTSPLTQ…EAVQQAQRLL (66 aa)) folds into the HTH luxR-type domain. A DNA-binding region (H-T-H motif) is located at residues 856–875 (NDQIANELDVAATTIKTHIR).

Belongs to the MalT family. As to quaternary structure, monomer in solution. Oligomerizes to an active state in the presence of the positive effectors ATP and maltotriose.

Its activity is regulated as follows. Activated by ATP and maltotriose, which are both required for DNA binding. In terms of biological role, positively regulates the transcription of the maltose regulon whose gene products are responsible for uptake and catabolism of malto-oligosaccharides. Specifically binds to the promoter region of its target genes, recognizing a short DNA motif called the MalT box. This chain is HTH-type transcriptional regulator MalT, found in Yersinia pseudotuberculosis serotype O:1b (strain IP 31758).